The chain runs to 92 residues: UPF0223 protein SSP1692 (92 aa).

The protein belongs to the UPF0223 family.

This is UPF0223 protein SSP1692 from Staphylococcus saprophyticus subsp. saprophyticus (strain ATCC 15305 / DSM 20229 / NCIMB 8711 / NCTC 7292 / S-41).